We begin with the raw amino-acid sequence, 375 residues long: Chaperone protein DnaJ (375 aa).

The J domain occupies 5–70 (DFYETLGVAK…QKRAAYDRYG (66 aa)). The CR-type zinc-finger motif lies at 136-214 (GKTAQIRVPT…CHGQGRVTEE (79 aa)). Zn(2+) contacts are provided by Cys-149, Cys-152, Cys-166, Cys-169, Cys-188, Cys-191, Cys-202, and Cys-205. CXXCXGXG motif repeat units follow at residues 149 to 156 (CDVCSGSG), 166 to 173 (CGTCQGTG), 188 to 195 (CPTCHGRG), and 202 to 209 (CPKCHGQG).

The protein belongs to the DnaJ family. Homodimer. It depends on Zn(2+) as a cofactor.

The protein localises to the cytoplasm. Functionally, participates actively in the response to hyperosmotic and heat shock by preventing the aggregation of stress-denatured proteins and by disaggregating proteins, also in an autonomous, DnaK-independent fashion. Unfolded proteins bind initially to DnaJ; upon interaction with the DnaJ-bound protein, DnaK hydrolyzes its bound ATP, resulting in the formation of a stable complex. GrpE releases ADP from DnaK; ATP binding to DnaK triggers the release of the substrate protein, thus completing the reaction cycle. Several rounds of ATP-dependent interactions between DnaJ, DnaK and GrpE are required for fully efficient folding. Also involved, together with DnaK and GrpE, in the DNA replication of plasmids through activation of initiation proteins. In Rhizobium etli (strain ATCC 51251 / DSM 11541 / JCM 21823 / NBRC 15573 / CFN 42), this protein is Chaperone protein DnaJ.